A 59-amino-acid chain; its full sequence is Large ribosomal subunit protein bL32 (59 aa).

Positions 1–15 are enriched in basic residues; it reads MAVPKKKTSKSKRDM. The segment at 1–26 is disordered; that stretch reads MAVPKKKTSKSKRDMRRATWNRKAAA.

It belongs to the bacterial ribosomal protein bL32 family.

The protein is Large ribosomal subunit protein bL32 of Cyanothece sp. (strain PCC 7425 / ATCC 29141).